The chain runs to 223 residues: Probable transaldolase (223 aa).

Lysine 91 (schiff-base intermediate with substrate) is an active-site residue.

Belongs to the transaldolase family. Type 3B subfamily.

The protein localises to the cytoplasm. It catalyses the reaction D-sedoheptulose 7-phosphate + D-glyceraldehyde 3-phosphate = D-erythrose 4-phosphate + beta-D-fructose 6-phosphate. Its pathway is carbohydrate degradation; pentose phosphate pathway; D-glyceraldehyde 3-phosphate and beta-D-fructose 6-phosphate from D-ribose 5-phosphate and D-xylulose 5-phosphate (non-oxidative stage): step 2/3. Transaldolase is important for the balance of metabolites in the pentose-phosphate pathway. The sequence is that of Probable transaldolase from Chlorobium phaeobacteroides (strain BS1).